Reading from the N-terminus, the 453-residue chain is Bifunctional protein GlmU (453 aa).

The segment at 1 to 225 is pyrophosphorylase; sequence MNIVILAAGT…EWETLGVNSK (225 aa). Residues 6–9, Lys20, Gln71, 76–77, 98–100, Gly135, Glu150, Asn165, and Asn223 contribute to the UDP-N-acetyl-alpha-D-glucosamine site; these read LAAG, GT, and YGD. Position 100 (Asp100) interacts with Mg(2+). Asn223 provides a ligand contact to Mg(2+). Positions 226-246 are linker; the sequence is AQLAELERIHQRNIAEALLVD. Residues 247–453 are N-acetyltransferase; that stretch reads GVTLADPARL…GYVRPVKKKS (207 aa). 2 residues coordinate UDP-N-acetyl-alpha-D-glucosamine: Arg329 and Lys347. The active-site Proton acceptor is His359. The UDP-N-acetyl-alpha-D-glucosamine site is built by Tyr362 and Asn373. Acetyl-CoA contacts are provided by residues Ala376, 382 to 383, Ser401, and Ala419; that span reads NY.

In the N-terminal section; belongs to the N-acetylglucosamine-1-phosphate uridyltransferase family. This sequence in the C-terminal section; belongs to the transferase hexapeptide repeat family. As to quaternary structure, homotrimer. Mg(2+) serves as cofactor.

The protein localises to the cytoplasm. It carries out the reaction alpha-D-glucosamine 1-phosphate + acetyl-CoA = N-acetyl-alpha-D-glucosamine 1-phosphate + CoA + H(+). The catalysed reaction is N-acetyl-alpha-D-glucosamine 1-phosphate + UTP + H(+) = UDP-N-acetyl-alpha-D-glucosamine + diphosphate. Its pathway is nucleotide-sugar biosynthesis; UDP-N-acetyl-alpha-D-glucosamine biosynthesis; N-acetyl-alpha-D-glucosamine 1-phosphate from alpha-D-glucosamine 6-phosphate (route II): step 2/2. The protein operates within nucleotide-sugar biosynthesis; UDP-N-acetyl-alpha-D-glucosamine biosynthesis; UDP-N-acetyl-alpha-D-glucosamine from N-acetyl-alpha-D-glucosamine 1-phosphate: step 1/1. It functions in the pathway bacterial outer membrane biogenesis; LPS lipid A biosynthesis. Catalyzes the last two sequential reactions in the de novo biosynthetic pathway for UDP-N-acetylglucosamine (UDP-GlcNAc). The C-terminal domain catalyzes the transfer of acetyl group from acetyl coenzyme A to glucosamine-1-phosphate (GlcN-1-P) to produce N-acetylglucosamine-1-phosphate (GlcNAc-1-P), which is converted into UDP-GlcNAc by the transfer of uridine 5-monophosphate (from uridine 5-triphosphate), a reaction catalyzed by the N-terminal domain. The chain is Bifunctional protein GlmU from Burkholderia lata (strain ATCC 17760 / DSM 23089 / LMG 22485 / NCIMB 9086 / R18194 / 383).